The primary structure comprises 684 residues: TBC1 domain family member 23 (684 aa).

The Rab-GAP TBC domain occupies 44 to 225; that stretch reads PLPAELRAKV…AIWDGYLQQA (182 aa). Position 300 is a phosphoserine (Ser-300). The Rhodanese domain occupies 334–446; sequence EGVRFFVVDC…LQQHLADINV (113 aa). Residues Ser-469, Ser-474, and Ser-507 each carry the phosphoserine modification. Thr-514 is modified (phosphothreonine). The segment at 514–558 is may mediate the interaction with C17orf75, FAM91A1 and WDR11; the sequence is TPVDRHVSSSDRVGKPYRGVKPVFSIGDEEEYDTDEIDSSSMSDD. Residues 514–684 are may mediate the interaction with WASHC1; the sequence is TPVDRHVSSS…IMKVLDALES (171 aa). Ser-556 is subject to Phosphoserine. Residues 559-684 form a may mediate the interaction with FKBP15 and WASHC2; required for endosome to Golgi trafficking region; the sequence is DRKEVVNIQT…IMKVLDALES (126 aa).

Directly interacts with GOLGA1 and GOLGA4. Interacts with FAM91A1, C17ORF75 and WDR11; the interaction recruits TBC1D23 to AP-1-derived vesicles. Directly interacts with WASHC1 and WASHC2/FAM21. Interacts with FKBP15.

It is found in the golgi apparatus. It localises to the trans-Golgi network. Its subcellular location is the cytoplasmic vesicle. Its function is as follows. Putative Rab GTPase-activating protein which plays a role in vesicular trafficking. Involved in endosome-to-Golgi trafficking. Acts as a bridging protein by binding simultaneously to golgins, including GOLGA1 and GOLGA4, located at the trans-Golgi, and to the WASH complex, located on endosome-derived vesicles. Together with WDR11 complex facilitates the golgin-mediated capture of vesicles generated using AP-1. Plays a role in brain development, including in cortical neuron positioning. May also be important for neurite outgrowth, possibly through its involvement in membrane trafficking and cargo delivery, 2 processes which are essential for axonal and dendritic growth. May act as a general inhibitor of innate immunity signaling, strongly inhibiting multiple TLR and dectin/CLEC7A-signaling pathways. Does not alter initial activation events, but instead affects maintenance of inflammatory gene expression several hours after bacterial lipopolysaccharide (LPS) challenge. The chain is TBC1 domain family member 23 (Tbc1d23) from Mus musculus (Mouse).